A 765-amino-acid polypeptide reads, in one-letter code: Protein transport protein Sec23A (765 aa).

Zn(2+) contacts are provided by Cys-61, Cys-66, Cys-85, and Cys-88. Residues 632–718 (PEPVLLDSSS…EHGGSQARFL (87 aa)) form a Gelsolin-like repeat.

The protein belongs to the SEC23/SEC24 family. SEC23 subfamily. COPII is composed of at least five proteins: the Sec23/24 complex, the Sec13/31 complex and Sar1.

It localises to the cytoplasmic vesicle. It is found in the COPII-coated vesicle membrane. The protein resides in the endoplasmic reticulum membrane. Its subcellular location is the cytoplasm. The protein localises to the cytosol. Functionally, component of the coat protein complex II (COPII) which promotes the formation of transport vesicles from the endoplasmic reticulum (ER). The coat has two main functions, the physical deformation of the endoplasmic reticulum membrane into vesicles and the selection of cargo molecules for their transport to the Golgi complex. In Danio rerio (Zebrafish), this protein is Protein transport protein Sec23A.